The chain runs to 293 residues: Heterogeneous nuclear ribonucleoprotein C-like 1 (293 aa).

The region spanning 16-87 (SRVFIGNLNT…QVVDINLAAE (72 aa)) is the RRM domain. Disordered regions lie at residues 137–177 (ALAV…KLKG) and 206–293 (KEQS…QDDS). The stretch at 177 to 225 (GDDLQAIKQELTQIKQKVDSLLENLEKIEKEQSKQEVEVKNAKSEEEQS) forms a coiled coil. 2 stretches are compositionally biased toward basic and acidic residues: residues 206 to 222 (KEQS…KSEE) and 229 to 240 (MKKDETHVKMES). Composition is skewed to acidic residues over residues 242 to 267 (GGAE…DDQL) and 275 to 284 (KEAEEGEDDR).

It belongs to the RRM HNRPC family. RALY subfamily.

The protein resides in the nucleus. Its function is as follows. May play a role in nucleosome assembly by neutralizing basic proteins such as A and B core hnRNPs. This chain is Heterogeneous nuclear ribonucleoprotein C-like 1 (HNRNPCL1), found in Homo sapiens (Human).